The sequence spans 232 residues: Sugar fermentation stimulation protein homolog (232 aa).

It belongs to the SfsA family.

This Shouchella clausii (strain KSM-K16) (Alkalihalobacillus clausii) protein is Sugar fermentation stimulation protein homolog.